Here is a 545-residue protein sequence, read N- to C-terminus: Methionine--tRNA ligase (545 aa).

Residues 13–23 (PYANGPLHIGH) carry the 'HIGH' region motif. Zn(2+)-binding residues include cysteine 144, cysteine 147, cysteine 157, and cysteine 160. A 'KMSKS' region motif is present at residues 330–334 (KISKS). Residue lysine 333 coordinates ATP.

It belongs to the class-I aminoacyl-tRNA synthetase family. MetG type 1 subfamily. Monomer. Requires Zn(2+) as cofactor.

It is found in the cytoplasm. The catalysed reaction is tRNA(Met) + L-methionine + ATP = L-methionyl-tRNA(Met) + AMP + diphosphate. Is required not only for elongation of protein synthesis but also for the initiation of all mRNA translation through initiator tRNA(fMet) aminoacylation. This is Methionine--tRNA ligase from Blochmanniella floridana.